The chain runs to 930 residues: Probable outer membrane protein pmp8 (930 aa).

A signal peptide spans 1–26 (MKIPLHKLLISSTLVTPILLSIATYG). Residues 636 to 930 (SIYQQRGLWA…NVDCGLRYSF (295 aa)) enclose the Autotransporter domain.

It belongs to the PMP outer membrane protein family.

It localises to the secreted. It is found in the cell wall. The protein localises to the cell outer membrane. This Chlamydia pneumoniae (Chlamydophila pneumoniae) protein is Probable outer membrane protein pmp8 (pmp8).